A 729-amino-acid polypeptide reads, in one-letter code: Cellulose synthase catalytic subunit [UDP-forming] (729 aa).

The next 3 helical transmembrane spans lie at 30–50, 110–130, and 171–191; these read LATWALWLLGALLLVFVVAVP, FILGLGLLGAELYAFVILVLG, and TTVLAASVIDWPAGKITIHLL. Residues 151–244 form a catalytic subdomain A region; sequence LWPSVDVFIP…YVAIFDCDHI (94 aa). Asp193 is a catalytic residue. Substrate-binding residues include Asp240 and Asp242. The segment at 321 to 381 is catalytic subdomain B; the sequence is TALEEVGGVA…AQRIRWARGM (61 aa). Residue Asp337 is part of the active site. 5 consecutive transmembrane segments (helical) span residues 405–425, 427–447, 520–540, 549–569, and 610–630; these read LNAMLHFFYGVPRIIYLTAPL, YLFFGAHVIQASALMILAYAL, LFLLLLNVVGMVAGVLRLIYV, IWFNLAWTLYNMVLLGATIAT, and MAIMLAQPQPIEPGLPVQIGL. Residues 575–671 form the PilZ domain; the sequence is QVRSAHRVPL…QERWLVASTF (97 aa).

It belongs to the glycosyltransferase 2 family. Requires Mg(2+) as cofactor.

Its subcellular location is the cell inner membrane. The enzyme catalyses [(1-&gt;4)-beta-D-glucosyl](n) + UDP-alpha-D-glucose = [(1-&gt;4)-beta-D-glucosyl](n+1) + UDP + H(+). It participates in glycan metabolism; bacterial cellulose biosynthesis. Its activity is regulated as follows. Activated by bis-(3'-5') cyclic diguanylic acid (c-di-GMP). In terms of biological role, catalytic subunit of cellulose synthase. It polymerizes uridine 5'-diphosphate glucose to cellulose, which is produced as an extracellular component for mechanical and chemical protection. The protein is Cellulose synthase catalytic subunit [UDP-forming] (bcsA) of Xanthomonas axonopodis pv. citri (strain 306).